The primary structure comprises 356 residues: Terpene synthase 10 (356 aa).

The short motif at 90 to 95 is the DDxx(x)D/E motif element; the sequence is DDYLDS. Positions 232 to 240 match the NDxxSxxxD/E motif motif; sequence NDAVSYAKE.

Belongs to the terpene synthase family.

The enzyme catalyses geranylgeranyl diphosphate = beta-araneosene + diphosphate. Terpene synthase that converts its substrate farnesyl diphosphate (FPP) into several unidentified sesquiterpenes. TPS10 also converts geranylgeranyl diphosphate (GGPP) into the diterpene beta-araneosene. This chain is Terpene synthase 10, found in Dictyostelium purpureum (Slime mold).